The sequence spans 460 residues: Diguanylate cyclase DosC (460 aa).

Histidine 98 provides a ligand contact to heme. Residues 325 to 458 (TPLSVLIIDV…GRNRVELWKA (134 aa)) form the GGDEF domain. A Mg(2+)-binding site is contributed by aspartate 333. Asparagine 341 and aspartate 350 together coordinate substrate. Aspartate 376 provides a ligand contact to Mg(2+). Aspartate 376 serves as the catalytic Proton acceptor.

It depends on heme as a cofactor. Mg(2+) is required as a cofactor.

The enzyme catalyses 2 GTP = 3',3'-c-di-GMP + 2 diphosphate. The protein operates within purine metabolism; 3',5'-cyclic di-GMP biosynthesis. Globin-coupled heme-based oxygen sensor protein displaying diguanylate cyclase (DGC) activity in response to oxygen availability. Thus, catalyzes the synthesis of cyclic diguanylate (c-di-GMP) via the condensation of 2 GTP molecules. Cyclic-di-GMP is a second messenger which controls cell surface-associated traits in bacteria. The chain is Diguanylate cyclase DosC (dosC) from Shigella sonnei (strain Ss046).